The following is a 131-amino-acid chain: Profilin-3 (131 aa).

Belongs to the profilin family. As to quaternary structure, occurs in many kinds of cells as a complex with monomeric actin in a 1:1 ratio.

The protein resides in the cytoplasm. It localises to the cytoskeleton. Functionally, binds to actin and affects the structure of the cytoskeleton. At high concentrations, profilin prevents the polymerization of actin, whereas it enhances it at low concentrations. By binding to PIP2, it inhibits the formation of IP3 and DG. The protein is Profilin-3 of Hevea brasiliensis (Para rubber tree).